Consider the following 652-residue polypeptide: Iron-regulated outer membrane virulence protein (652 aa).

The first 25 residues, 1 to 25, serve as a signal peptide directing secretion; it reads MSRFNPSPVSLSVTLGLMFSASAFA. Positions 33 to 40 match the TonB box motif; sequence ETMVVTAA. Positions 45–162 constitute a TBDR plug domain; sequence VIQNAPASIS…IGGVINIITR (118 aa). The 486-residue stretch at 167–652 folds into the TBDR beta-barrel domain; it reads QWSGNVQLST…RYWLGLDIAF (486 aa). The TonB C-terminal box signature appears at 635-652; that stretch reads YGYVEDGRRYWLGLDIAF.

This sequence belongs to the TonB-dependent receptor family.

Its subcellular location is the cell outer membrane. Involved in the initial step of iron uptake by binding ferric vibriobactin, an iron chelatin siderophore that allows V.cholerae to extract iron from the environment. The polypeptide is Iron-regulated outer membrane virulence protein (irgA) (Vibrio cholerae serotype O1 (strain ATCC 39315 / El Tor Inaba N16961)).